A 577-amino-acid polypeptide reads, in one-letter code: MLQTLQQQGLRHVVLCPGSRSGPLALAAAGLMRAGLITLSTAIDERSAGFYALGRSSASGVATAVITTSGTAVANLLPAAVEADRSSQPLLLISADRPLRLKNKGANQTVNQEAFLTPVCRWCGSGPLDGLSAGLDQELQALAQNAWRHLHQQPGPVHLNLPFEEPLHPDLDQQSTFWSQWNSSESVAITHNPELCKPTSHSEAPSLDPDQPGVIVAGPWRGLSATLEPYQAALIAWQQRSGWPVLADPLAAIPSNLGGVIRSWDLLLPNGLSQLPANAQVLRLGSMPASRRLEAWIANQQGPQLLITEGDPRPLDPLEIAEQWSGGLAQWWKQLNPRLRVIDATKPDIEARGGSPLQAWRTADLELQQRLYELLPGHGPANEPALMFALARLLPAELPVMLAASSPVRDWQAFAASDTGRRRCYSFRGASGIDGTLSLALGIAAELGPTVLITGDLALLHDSNGWLLASAAQQPLLVLLIDNAGGGIFEQLPIETTPRDGFNQLFAMPQQVDPLALAAAHSIPVRQLACLDDLPSALEWGLGSAGPTLLRVCTDRSSDAQLRRNLRKALQQSKSLS.

This sequence belongs to the TPP enzyme family. MenD subfamily. In terms of assembly, homodimer. Requires Mg(2+) as cofactor. Mn(2+) is required as a cofactor. Thiamine diphosphate serves as cofactor.

The catalysed reaction is isochorismate + 2-oxoglutarate + H(+) = 5-enolpyruvoyl-6-hydroxy-2-succinyl-cyclohex-3-ene-1-carboxylate + CO2. It functions in the pathway quinol/quinone metabolism; 1,4-dihydroxy-2-naphthoate biosynthesis; 1,4-dihydroxy-2-naphthoate from chorismate: step 2/7. It participates in cofactor biosynthesis; phylloquinone biosynthesis. In terms of biological role, catalyzes the thiamine diphosphate-dependent decarboxylation of 2-oxoglutarate and the subsequent addition of the resulting succinic semialdehyde-thiamine pyrophosphate anion to isochorismate to yield 2-succinyl-5-enolpyruvyl-6-hydroxy-3-cyclohexene-1-carboxylate (SEPHCHC). The polypeptide is 2-succinyl-5-enolpyruvyl-6-hydroxy-3-cyclohexene-1-carboxylate synthase (Synechococcus sp. (strain CC9311)).